We begin with the raw amino-acid sequence, 277 residues long: Sulfate transport system permease protein CysT (277 aa).

Transmembrane regions (helical) follow at residues 17–37 (LGTS…ALVM), 64–84 (LLAA…MAWI), 99–119 (LMDL…ASLF), 136–156 (VTYT…PFVV), 188–205 (VVLP…ALSF), 215–235 (VIFI…MIFV), and 243–263 (PAAS…LFSI). The ABC transmembrane type-1 domain occupies 60–263 (YKVTLLAAFV…AASLLLLFSI (204 aa)).

It belongs to the binding-protein-dependent transport system permease family. CysTW subfamily. The complex is composed of two ATP-binding proteins (CysA), two transmembrane proteins (CysT and CysW) and a solute-binding protein (CysP).

It is found in the cell inner membrane. Its function is as follows. Part of the ABC transporter complex CysAWTP (TC 3.A.1.6.1) involved in sulfate/thiosulfate import. Probably responsible for the translocation of the substrate across the membrane. This chain is Sulfate transport system permease protein CysT (cysU), found in Salmonella typhimurium (strain LT2 / SGSC1412 / ATCC 700720).